A 110-amino-acid polypeptide reads, in one-letter code: Cell cycle protein GpsB (110 aa).

Residues 32–73 (LDDVIKDYENYLEQIEKLQMENRRLQQALDKKESEASNVRNS) are a coiled coil.

Belongs to the GpsB family. Forms polymers through the coiled coil domains. Interacts with PBP1, MreC and EzrA.

It is found in the cytoplasm. Divisome component that associates with the complex late in its assembly, after the Z-ring is formed, and is dependent on DivIC and PBP2B for its recruitment to the divisome. Together with EzrA, is a key component of the system that regulates PBP1 localization during cell cycle progression. Its main role could be the removal of PBP1 from the cell pole after pole maturation is completed. Also contributes to the recruitment of PBP1 to the division complex. Not essential for septum formation. The protein is Cell cycle protein GpsB of Streptococcus agalactiae serotype Ia (strain ATCC 27591 / A909 / CDC SS700).